The sequence spans 307 residues: 2-haloacid dehalogenase, configuration-inverting (307 aa).

Belongs to the HAD-like hydrolase superfamily. S-2-haloalkanoic acid dehalogenase family. Homodimer.

The catalysed reaction is an (S)-2-haloacid + H2O = a (2R)-2-hydroxycarboxylate + a halide anion + H(+). It carries out the reaction an (R)-2-haloacid + H2O = a (2S)-2-hydroxycarboxylate + a halide anion + H(+). In terms of biological role, dehalogenates both (S)- and (R)-2-haloalkanoic acids to the corresponding (R)- and (S)-hydroxyalkanoic acids, respectively, with inversion of configuration at C-2. Acts on 2-haloalkanoic acids whose carbon chain lengths are five or less. This is 2-haloacid dehalogenase, configuration-inverting from Pseudomonas sp. (strain 113).